A 423-amino-acid chain; its full sequence is AP-1 complex subunit mu-2 (423 aa).

Residues 168–421 (KNEVFIDVIE…ITQSGDYQLR (254 aa)) form the MHD domain.

Belongs to the adaptor complexes medium subunit family. Adaptor protein complex 1 (AP-1) is a heterotetramer composed of two large adaptins (gamma-type subunit AP1G1 and beta-type subunit AP1B1), a medium adaptin (mu-type subunit AP1M1 or AP1M2) and a small adaptin (sigma-type subunit AP1S1 or AP1S2 or AP1S3). Interacts with P2X4. Phosphorylation of membrane-bound AP1M1/AP1M2 increases its affinity for sorting signals.

Its subcellular location is the golgi apparatus. It is found in the cytoplasmic vesicle. It localises to the clathrin-coated vesicle membrane. In terms of biological role, subunit of clathrin-associated adaptor protein complex 1 that plays a role in protein sorting in the trans-Golgi network (TGN) and endosomes. The AP complexes mediate the recruitment of clathrin to membranes and the recognition of sorting signals within the cytosolic tails of transmembrane cargo molecules. The protein is AP-1 complex subunit mu-2 (AP1M2) of Homo sapiens (Human).